The sequence spans 221 residues: Uracil-DNA glycosylase (221 aa).

The active-site Proton acceptor is aspartate 65.

It belongs to the uracil-DNA glycosylase (UDG) superfamily. UNG family.

The protein resides in the cytoplasm. It carries out the reaction Hydrolyzes single-stranded DNA or mismatched double-stranded DNA and polynucleotides, releasing free uracil.. Functionally, excises uracil residues from the DNA which can arise as a result of misincorporation of dUMP residues by DNA polymerase or due to deamination of cytosine. The sequence is that of Uracil-DNA glycosylase from Christiangramia forsetii (strain DSM 17595 / CGMCC 1.15422 / KT0803) (Gramella forsetii).